The sequence spans 613 residues: 9-cis-epoxycarotenoid dioxygenase NCED5, chloroplastic (613 aa).

Residues 1 to 15 are compositionally biased toward polar residues; sequence MPTTFTPNSPASSCS. The N-terminal 36 residues, 1–36, are a transit peptide targeting the chloroplast; sequence MPTTFTPNSPASSCSIHHRASPSRGARNSVRFTRPR. Residues 1-62 form a disordered region; that stretch reads MPTTFTPNSP…PPAYVPPPPP (62 aa). Residues 37 to 50 are compositionally biased toward low complexity; that stretch reads AAAAATNSVLSAPS. Pro residues predominate over residues 51–62; that stretch reads SVPPAYVPPPPP. Fe cation-binding residues include His305, His354, His419, and His600.

It belongs to the carotenoid oxygenase family. Requires Fe(2+) as cofactor.

It localises to the plastid. The protein localises to the chloroplast. It carries out the reaction a 9-cis-epoxycarotenoid + O2 = a 12'-apo-carotenal + 2-cis,4-trans-xanthoxin. It catalyses the reaction 9-cis-violaxanthin + O2 = (3S,5R,6S)-5,6-epoxy-3-hydroxy-5,6-dihydro-12'-apo-beta-caroten-12'-al + 2-cis,4-trans-xanthoxin. The catalysed reaction is 9'-cis-neoxanthin + O2 = (3S,5R,6R)-3,5-dihydroxy-6,7-didehydro-5,6-dihydro-12'-apo-beta-caroten-12'-al + 2-cis,4-trans-xanthoxin. Its function is as follows. Has a 11,12(11',12') 9-cis epoxycarotenoid cleavage activity. Catalyzes the first step of abscisic-acid biosynthesis from carotenoids. The chain is 9-cis-epoxycarotenoid dioxygenase NCED5, chloroplastic from Oryza sativa subsp. japonica (Rice).